A 213-amino-acid chain; its full sequence is Large ribosomal subunit protein uL1 (213 aa).

It belongs to the universal ribosomal protein uL1 family. As to quaternary structure, part of the 50S ribosomal subunit.

Its function is as follows. Probably involved in E site tRNA release. Binds directly to 23S rRNA. Functionally, protein L1 is also a translational repressor protein, it controls the translation of its operon by binding to its mRNA. The chain is Large ribosomal subunit protein uL1 from Methanothermococcus thermolithotrophicus (Methanococcus thermolithotrophicus).